The primary structure comprises 153 residues: Pheromone-binding protein Gp-9 (153 aa).

The signal sequence occupies residues 1 to 19 (MKTFVLHIFIFAFVAFASA). 3 disulfides stabilise this stretch: Cys37-Cys77, Cys73-Cys129, and Cys118-Cys138.

The protein belongs to the PBP/GOBP family. Homodimer.

It localises to the secreted. Functionally, colony queen number, a major feature of social organization, is associated with worker genotype for Gp-9. Colonies are headed by either a single reproductive queen (monogyne form) or multiple queens (polygyne form). Differences in worker Gp-9 genotypes between social forms may cause differences in workers' abilities to recognize queens and regulate their numbers. The chain is Pheromone-binding protein Gp-9 from Solenopsis geminata (Tropical fire ant).